The following is a 357-amino-acid chain: Glutamine synthetase root isozyme 5 (357 aa).

One can recognise a GS beta-grasp domain in the interval 19-99 (IIAEYIWVGG…VMCDCYTPQG (81 aa)). In terms of domain architecture, GS catalytic spans 106–357 (KRYKAATVFS…ADTTILWKGN (252 aa)).

Belongs to the glutamine synthetase family. As to quaternary structure, homooctamer. In terms of tissue distribution, found mainly in the cortical tissues of seedling roots, stem and seedling shoot.

It localises to the cytoplasm. The catalysed reaction is L-glutamate + NH4(+) + ATP = L-glutamine + ADP + phosphate + H(+). In terms of biological role, plays a role in the flow of nitrogen into nitrogenous organic compounds. In Zea mays (Maize), this protein is Glutamine synthetase root isozyme 5 (GS1-5).